The chain runs to 444 residues: Trigger factor (444 aa).

The PPIase FKBP-type domain maps to 160-245 (DMQVTFDFEG…VKQVEKPKLP (86 aa)).

Belongs to the FKBP-type PPIase family. Tig subfamily.

The protein resides in the cytoplasm. The enzyme catalyses [protein]-peptidylproline (omega=180) = [protein]-peptidylproline (omega=0). In terms of biological role, involved in protein export. Acts as a chaperone by maintaining the newly synthesized protein in an open conformation. Functions as a peptidyl-prolyl cis-trans isomerase. The polypeptide is Trigger factor (Acinetobacter baylyi (strain ATCC 33305 / BD413 / ADP1)).